Reading from the N-terminus, the 547-residue chain is MASADRVTAPVDTVTTGPIEGSVKHYREVDGLRIPVRRINLTNGETFDVYDTSGPYTDENATIDLEAGLPKLRDSWDKPTVAGPRTQLAWARAGIVTPEMRFIAAREGVEPELVRAEVAAGRAVIPANHNHPELEPTIIGKKFLVKINANIGNSAVSSSIAEEVEKMVWATRWGADTIMDLSTGKNIHETREWILRNSPVPVGTVPIYQALEKVNGDPAALTWEIYRDTVIEQAEQGVDYMTVHAGVLLRYVPLTAKRVTGIVSRGGSIMAAWCLAHHRESFLYTHFEELCEILARYDVTFSLGDGLRPGSVADANDEAQFAELRTLGELTKIAKSHGVQVMIEGPGHVPMHKIVENVRLEEELCEEAPFYTLGPLATDIAPAYDHITSAIGAAIIAQAGTAMLCYVTPKEHLGLPNRDDVKTGVITYKIAAHAADLAKGHPHAQQRDDALSKARFEFRWRDQFALSLDPDTAREYHDETMPAEPAKTAHFCSMCGPKFCSMRISADVREYAEANNLTDVAAIEAGMAAKSAEFAESGGKVYLPVVS.

Residues Asn-150, Met-179, Tyr-208, His-244, Ser-264–Gly-266, Asp-305–Arg-308, and Glu-344 contribute to the substrate site. His-348 is a Zn(2+) binding site. Tyr-371 lines the substrate pocket. Residue His-412 coordinates Zn(2+). Positions 492, 495, and 500 each coordinate [4Fe-4S] cluster.

It belongs to the ThiC family. It depends on [4Fe-4S] cluster as a cofactor.

The catalysed reaction is 5-amino-1-(5-phospho-beta-D-ribosyl)imidazole + S-adenosyl-L-methionine = 4-amino-2-methyl-5-(phosphooxymethyl)pyrimidine + CO + 5'-deoxyadenosine + formate + L-methionine + 3 H(+). It functions in the pathway cofactor biosynthesis; thiamine diphosphate biosynthesis. Functionally, catalyzes the synthesis of the hydroxymethylpyrimidine phosphate (HMP-P) moiety of thiamine from aminoimidazole ribotide (AIR) in a radical S-adenosyl-L-methionine (SAM)-dependent reaction. In Nocardia farcinica (strain IFM 10152), this protein is Phosphomethylpyrimidine synthase.